Reading from the N-terminus, the 373-residue chain is Filamin-binding LIM protein 1 (373 aa).

Residues 1–70 form a filamin-binding region; it reads MASKPEKRVA…SPWTTPGRAA (70 aa). Disordered regions lie at residues 41 to 119 and 135 to 176; these read RPWE…PSEE and QLHL…PVEK. A compositionally biased stretch (pro residues) spans 104–114; it reads LPPPPPPPPVL. 3 LIM zinc-binding domains span residues 181 to 242, 243 to 300, and 301 to 370; these read DICA…TLER, CGKC…RKFA, and PVCS…RSAA. The segment at 276–373 is FERMT2-binding; sequence IGDESFALGS…HVKRSAAGCC (98 aa).

As to quaternary structure, interacts with NKX2-5. Isoform 1 and isoform 3 interact with FERMT2, FLNA, FLNB and FLNC. Isoform 2 interacts with FLNB. Isoform 1 and isoform 3 are expressed in heart, kidney, lung, pancreas, placenta and platelets. Isoform 2 is expressed in brain, heart, kidney, lung, pancreas, placenta, skeletal muscle and platelets.

It is found in the cell junction. It localises to the focal adhesion. Its subcellular location is the cytoplasm. The protein localises to the cytoskeleton. The protein resides in the stress fiber. Serves as an anchoring site for cell-ECM adhesion proteins and filamin-containing actin filaments. Is implicated in cell shape modulation (spreading) and motility. May participate in the regulation of filamin-mediated cross-linking and stabilization of actin filaments. May also regulate the assembly of filamin-containing signaling complexes that control actin assembly. Promotes dissociation of FLNA from ITGB3 and ITGB7. Promotes activation of integrins and regulates integrin-mediated cell-cell adhesion. This is Filamin-binding LIM protein 1 (FBLIM1) from Homo sapiens (Human).